A 574-amino-acid polypeptide reads, in one-letter code: Proline--tRNA ligase (574 aa).

Belongs to the class-II aminoacyl-tRNA synthetase family. ProS type 1 subfamily. As to quaternary structure, homodimer.

It is found in the cytoplasm. It carries out the reaction tRNA(Pro) + L-proline + ATP = L-prolyl-tRNA(Pro) + AMP + diphosphate. Its function is as follows. Catalyzes the attachment of proline to tRNA(Pro) in a two-step reaction: proline is first activated by ATP to form Pro-AMP and then transferred to the acceptor end of tRNA(Pro). As ProRS can inadvertently accommodate and process non-cognate amino acids such as alanine and cysteine, to avoid such errors it has two additional distinct editing activities against alanine. One activity is designated as 'pretransfer' editing and involves the tRNA(Pro)-independent hydrolysis of activated Ala-AMP. The other activity is designated 'posttransfer' editing and involves deacylation of mischarged Ala-tRNA(Pro). The misacylated Cys-tRNA(Pro) is not edited by ProRS. The sequence is that of Proline--tRNA ligase from Teredinibacter turnerae (strain ATCC 39867 / T7901).